We begin with the raw amino-acid sequence, 509 residues long: Otolin-1 (509 aa).

The N-terminal stretch at 1–25 (MPSLRLLAILTTLLAVVLMATQSSA) is a signal peptide. The disordered stretch occupies residues 23–96 (SSATRTTRRP…AYSLSPTDST (74 aa)). The span at 42 to 54 (RGGGTGGGGGGGD) shows a compositional bias: gly residues. Positions 62–75 (RQTTTTMSPSSSLG) are enriched in polar residues. An N-linked (GlcNAc...) asparagine glycan is attached at Asn121. The Collagen-like 1 domain maps to 193–244 (GDKGDQGDTGMPGAPGILGKEGQKGDLGPKGEKGETGLPGLKGDLGERGKPG). The interval 202-372 (GMPGAPGILG…GPKGPQGETA (171 aa)) is disordered. Residues 213-227 (EGQKGDLGPKGEKGE) show a composition bias toward basic and acidic residues. Residues Asn246 and Asn311 are each glycosylated (N-linked (GlcNAc...) asparagine). Residues 285-329 (GEKGEKGEAGLPGPPGPRGSVGPPGVNGSNGLPGPVGLRGQLGSP) enclose the Collagen-like 2 domain. The segment covering 302-322 (RGSVGPPGVNGSNGLPGPVGL) has biased composition (low complexity). The segment covering 327 to 342 (GSPGGKGEAGGRGPPG) has biased composition (gly residues). The region spanning 372 to 509 (AEQIRSAFSV…GFLLYADPKA (138 aa)) is the C1q domain. N-linked (GlcNAc...) asparagine glycosylation is present at Asn417.

It belongs to the OTOL1 family. Homooligomer; disulfide-linked; probably forms homotrimers. Interacts with otomp.

Its subcellular location is the secreted. The protein resides in the extracellular space. It localises to the extracellular matrix. In terms of biological role, collagen-like protein, which provides an organic scaffold for otoliths onto the sensory epithelium of the inner ear. Acts as a scaffold for biomineralization by sequestering calcium. This chain is Otolin-1 (Otol1), found in Oncorhynchus mykiss (Rainbow trout).